We begin with the raw amino-acid sequence, 161 residues long: Peptidyl-prolyl cis-trans isomerase 10 (161 aa).

The PPIase cyclophilin-type domain occupies 1–153 (MSVTLHTTSG…VQQKIQNVTI (153 aa)).

This sequence belongs to the cyclophilin-type PPIase family. PPIL3 subfamily.

The catalysed reaction is [protein]-peptidylproline (omega=180) = [protein]-peptidylproline (omega=0). In terms of biological role, PPIases accelerate the folding of proteins. It catalyzes the cis-trans isomerization of proline imidic peptide bonds in oligopeptides. In Caenorhabditis elegans, this protein is Peptidyl-prolyl cis-trans isomerase 10 (cyn-10).